A 1535-amino-acid polypeptide reads, in one-letter code: Protein artichoke (1535 aa).

The first 19 residues, 1–19 (MMLLPIFLLLCIGINLIRA), serve as a signal peptide directing secretion. LRR repeat units lie at residues 64–87 (KGRI…FFGS), 89–110 (QIVR…WLNE), 112–135 (ENGL…SLNG), 136–157 (MINM…DFSG), 158–181 (LLSL…LFRH), 183–206 (PKLQ…LFDG), 207–230 (LISL…ALSR), 231–256 (LPNL…IVKD), 257–280 (LEHL…SFVD), 281–304 (LPNL…AFLR), 306–328 (PQLK…SLLQ), 331–356 (GSGV…LLDA), 357–380 (LPRL…ALRG), 382–404 (GTLE…ALMA), 406–429 (PALR…FWNL), 430–452 (PGLK…LLAG), 453–476 (LPSL…SFRH), 478–500 (PLLE…TLIH), 521–545 (LPRI…ASKD), 548–571 (LPNL…GFQG), 573–595 (MELR…SFIG), 597–619 (QRLE…ALLP), 620–643 (LAEL…FFSN), 645–667 (SRLE…AFDT), 669–691 (RSLE…LGNL), 692–714 (NNLR…VIGG), 716–738 (RNVV…TFRN), 739–762 (LPKL…ALKG), 764–786 (DELQ…VFEE), 788–810 (PSLL…SFHN), 811–834 (ANSL…GLRS), 835–858 (MRNL…PLKA), 860–882 (NWLV…PFET), and 883–906 (MPRL…TFRN). Positions 919-963 (NPIDCNCEMQWLSVWLQETNFPYPGPKCQDGRLLRSARMERSLCV) constitute an LRRCT domain. Disordered stretches follow at residues 1036 to 1055 (HSAI…NSNI), 1253 to 1331 (TQAR…DSQY), 1377 to 1416 (VTTT…GRST), and 1429 to 1449 (AQPT…EGVA). The span at 1253 to 1270 (TQARPKPTKSSGESSETA) shows a compositional bias: polar residues. Composition is skewed to low complexity over residues 1271 to 1285 (TYEV…TTTT) and 1293 to 1315 (TSTT…TQVT). Polar residues-rich tracts occupy residues 1316–1328 (PAEN…TELD) and 1377–1391 (VTTT…NQVT). Positions 1398 to 1407 (TVPPPPPASP) are enriched in pro residues.

It is found in the secreted. Its subcellular location is the extracellular space. The protein localises to the extracellular matrix. It localises to the cytoplasm. Functionally, required for normal morphology and function of ciliated sensory organs. The chain is Protein artichoke from Drosophila melanogaster (Fruit fly).